Here is a 463-residue protein sequence, read N- to C-terminus: Lariat debranching enzyme (463 aa).

A divalent metal cation-binding residues include cysteine 8, histidine 10, aspartate 33, and asparagine 78. The lariat recognition loop stretch occupies residues 118–148 (SGIYSAMDYKKGRYEGLPYNYKMLKSIYHTR). Residues histidine 168, histidine 220, and histidine 222 each contribute to the a divalent metal cation site. The interval 250 to 324 (SGFSMKGLNE…QVTKFLALDK (75 aa)) is disordered. The span at 256–267 (GLNEPSQERLPV) shows a compositional bias: polar residues. Basic and acidic residues-rich tracts occupy residues 276–289 (DEEG…EKQD) and 299–323 (CRKE…LALD).

This sequence belongs to the lariat debranching enzyme family. Fe(2+) serves as cofactor. Requires Zn(2+) as cofactor. The cofactor is Mn(2+).

The protein localises to the nucleus. Its subcellular location is the cytoplasm. Active in presence of diverse metals including Fe(2+), Zn(2+) and Mn(2+). Binds two metal cations in two adjacent alpha and beta metal-binding pockets. Functionally, cleaves the 2'-5' phosphodiester linkage at the branch point of lariat intron pre-mRNAs after splicing and converts them into linear molecules that are subsequently degraded, thereby facilitating ribonucleotide turnover. This is Lariat debranching enzyme (dbr1) from Schizosaccharomyces pombe (strain 972 / ATCC 24843) (Fission yeast).